A 258-amino-acid polypeptide reads, in one-letter code: MNSIDPRAIIDPSAKLADGVEVGPWSIVGPDVEIGEGTVIGPHVVLKGPTRIGKHNRIFQFSSIGEDTPDLKYKGEPTRLVIGDHNVIREGVTIHRGTVQDRAETTVGDHNLIMAYAHIGHDSVIGNHCILVNNTALAGHVHVGDWAILSGYTLVHQYCHIGAHAFSGMGTAIGKDVPAFVTVFGSPAEARSMNFEGMRRRGFSDEVIHVLRRCYKIVYRQGLTVEDALKELAEPATQHPEVELFRQSILSSARGITR.

It belongs to the transferase hexapeptide repeat family. LpxA subfamily. In terms of assembly, homotrimer.

The protein localises to the cytoplasm. The catalysed reaction is a (3R)-hydroxyacyl-[ACP] + UDP-N-acetyl-alpha-D-glucosamine = a UDP-3-O-[(3R)-3-hydroxyacyl]-N-acetyl-alpha-D-glucosamine + holo-[ACP]. It functions in the pathway glycolipid biosynthesis; lipid IV(A) biosynthesis; lipid IV(A) from (3R)-3-hydroxytetradecanoyl-[acyl-carrier-protein] and UDP-N-acetyl-alpha-D-glucosamine: step 1/6. In terms of biological role, involved in the biosynthesis of lipid A, a phosphorylated glycolipid that anchors the lipopolysaccharide to the outer membrane of the cell. This chain is Acyl-[acyl-carrier-protein]--UDP-N-acetylglucosamine O-acyltransferase, found in Pseudomonas putida (strain ATCC 47054 / DSM 6125 / CFBP 8728 / NCIMB 11950 / KT2440).